The chain runs to 336 residues: 4-hydroxythreonine-4-phosphate dehydrogenase (336 aa).

Thr140 lines the substrate pocket. A divalent metal cation is bound by residues His171, His216, and His271. Substrate-binding residues include Lys279, Asn288, and Arg297.

Belongs to the PdxA family. As to quaternary structure, homodimer. Requires Zn(2+) as cofactor. The cofactor is Mg(2+). It depends on Co(2+) as a cofactor.

It is found in the cytoplasm. It catalyses the reaction 4-(phosphooxy)-L-threonine + NAD(+) = 3-amino-2-oxopropyl phosphate + CO2 + NADH. Its pathway is cofactor biosynthesis; pyridoxine 5'-phosphate biosynthesis; pyridoxine 5'-phosphate from D-erythrose 4-phosphate: step 4/5. Its function is as follows. Catalyzes the NAD(P)-dependent oxidation of 4-(phosphooxy)-L-threonine (HTP) into 2-amino-3-oxo-4-(phosphooxy)butyric acid which spontaneously decarboxylates to form 3-amino-2-oxopropyl phosphate (AHAP). The protein is 4-hydroxythreonine-4-phosphate dehydrogenase of Erythrobacter litoralis (strain HTCC2594).